Here is a 259-residue protein sequence, read N- to C-terminus: Trans-4-hydroxycyclohexanecarboxylate dehydrogenase (259 aa).

Residues arginine 20, methionine 22, aspartate 41, aspartate 73, valine 74, asparagine 100, tyrosine 164, lysine 168, valine 197, threonine 199, and threonine 202 each coordinate NAD(+). Tyrosine 164 serves as the catalytic Proton acceptor.

This sequence belongs to the short-chain dehydrogenases/reductases (SDR) family. Homodimer. Homotetramer.

The catalysed reaction is trans-4-hydroxycyclohexane-1-carboxylate + NAD(+) = 4-oxocyclohexane-1-carboxylate + NADH + H(+). With respect to regulation, strongly inhibited by N-bromosuccinimide. Not inhibited by sulfhydryl reagents, such as iodoacetic acid, iodoacetamide, N-ethylmaleimide and p-hydroxymercuribenzoic acid. Functionally, dehydrogenase involved in a cyclohexanecarboxylate (CHCA) degradation pathway. Catalyzes the NAD(+)-dependent dehydrogenation of trans-4-hydroxycyclohexanecarboxylate (trans-4-hydroxyCHCA) to form 4-oxocyclohexanecarboxylate (4-oxoCHCA). Is highly specific for the trans-4-hydroxy derivative and shows only weak activity with cis-4-hydroxyCHCA. Can also catalyze the reverse reaction (4-oxoCHCA reduction) with a higher catalytic efficiency. In the reverse reaction, is highly specific for 4-oxoCHCA and cannot use either the 2-oxo or the 3-oxo homolog as substrate. Cannot use NADP(+). The chain is Trans-4-hydroxycyclohexanecarboxylate dehydrogenase from Sinomonas cyclohexanicum (Corynebacterium cyclohexanicum).